The following is an 80-amino-acid chain: Clavaspirin (80 aa).

The N-terminal stretch at 1–17 is a signal peptide; that stretch reads MKTIILILLILGLGIDA. Residues 18–29 constitute a propeptide that is removed on maturation; the sequence is KSLEESKADEEK. Residue Leu52 is modified to Leucine amide. The propeptide occupies 53–80; sequence GDDQQDNGKFYGYYAEDNGKHWYDTGDQ.

Pharyngeal tissues and hemocytes.

The protein resides in the secreted. In terms of biological role, exhibits broad-spectrum antimicrobial activity against both Gram-positive and Gram-negative bacteria. Has potent hemolytic activity. The polypeptide is Clavaspirin (Styela clava (Sea squirt)).